A 1132-amino-acid polypeptide reads, in one-letter code: MDHRKSVDFTNEYIKQQTENQNHTPRGHRMMANFTIRKWNSETNFNEDDYGAIPTKSSIANLLNKFLKSRPTKDDLEMNKILKSEYKPITLRYSLIEILCNHIEKYALEQEGIFRVSGSNQQIRLFWQTFTTDNIEFPINEHNVAGALKLYIREQSEPLVPYEMFSNFISQLGDGGPVTFTAITNLMSKITPENLKIIKRLIRTAVIIVRHSQLNKMDANNMGIVFGPNIFKSRPDSPNIFSEAKYSNESVSFLISNYLNVFPDLEIPILGTETNTEENELLNNNNNNNNVIMPTTTTTTTSASSSILPTDSSNNNGGGSASSPVTKSIPLSSIGSSSTSPIISPSSSSSSSPIVGTNLTTGSIHSTSPTPFSLLATTTSTTTTNSNKVNSIINSTSQSKSQLLPIHPSLLDTNQMIERVEGNPLSQMKRKDFSITHHLSTKLQKTKHFRKEEIWDCFLILKVSGNLVNVKNSTTTTTTSTSTSTSTSTSTSTSSTTTNQPNSITQSNSASNNSLINNGKIKKSTTNLISQSNSQSSLQLNQTNSNNNNIVTLTPVYILITSQNVFFFDTRIYNIQYILPHSRLKEISVDVVNKGLFSILDGESHKLSFFLVPRPRVIDLLVRSLERGRAIAKLTNKSLASLQSRKFPLLESNSGAGGTSNFGKLPESRPVFESLAQNGFTELDVWEGTVDLLEVVKKFHHILIPSADQSKCVVEFLLPAIPEFKGIYRKSYKLDSKTTVYKIICLICEKAKLEPSKFLLRTLKGRTLFDNKSLGDFGLGTLFTSWQLRLIALESPESTGNFVVEFLMPDIPEFKGMQKKAIKVDAYQPLKRIMKGLCDKLKIPNHHYYHLIGPEGEVLGDNDVLSSIGLGIKYKTCKMKLAKKVFPVGKNPELDTPMVRSLVIDNIIGLAWSKIKDRHNERIRLYCKQMLDYIVDQTFVEIAKAELVPKRVAMLGKNSRYEFYHALSLKEEEDMILMDIQGYKETVYQSRSIVPSEPDSSPNYPLYRQKLPTIRGVGPINSIRDIKVNSAKNNFLSELKDNNKQQQQQQIGNTNDEHTIKPSQRIKYIAPTPVLNNPNSIVQLLALKPGASKLVEQLKNRMTITTSKINIFDVEDLVPKNSPVLSRKSYKL.

The Rho-GAP domain maps to 76-262 (LEMNKILKSE…FLISNYLNVF (187 aa)). 2 disordered regions span residues 279–354 (NELL…SSPI) and 472–517 (NSTT…SLIN). Positions 281-301 (LLNNNNNNNNVIMPTTTTTTT) are enriched in low complexity. The segment covering 302–311 (SASSSILPTD) has biased composition (polar residues). Low complexity-rich tracts occupy residues 328–354 (SIPL…SSPI), 473–498 (STTT…STTT), and 507–517 (SNSASNNSLIN).

The protein localises to the cytoplasm. Rho GTPase-activating protein involved in the signal transduction pathway. This chain is Rho GTPase-activating protein gacE (gacE), found in Dictyostelium discoideum (Social amoeba).